The sequence spans 395 residues: ATP phosphoribosyltransferase regulatory subunit (395 aa).

It belongs to the class-II aminoacyl-tRNA synthetase family. HisZ subfamily. In terms of assembly, heteromultimer composed of HisG and HisZ subunits.

Its subcellular location is the cytoplasm. It participates in amino-acid biosynthesis; L-histidine biosynthesis; L-histidine from 5-phospho-alpha-D-ribose 1-diphosphate: step 1/9. In terms of biological role, required for the first step of histidine biosynthesis. May allow the feedback regulation of ATP phosphoribosyltransferase activity by histidine. This Pseudomonas entomophila (strain L48) protein is ATP phosphoribosyltransferase regulatory subunit.